The chain runs to 313 residues: 4-diphosphocytidyl-2-C-methyl-D-erythritol kinase (313 aa).

Residue Lys-11 is part of the active site. 99-109 (PVAAGLAGGST) lines the ATP pocket. Asp-141 is an active-site residue.

Belongs to the GHMP kinase family. IspE subfamily.

It catalyses the reaction 4-CDP-2-C-methyl-D-erythritol + ATP = 4-CDP-2-C-methyl-D-erythritol 2-phosphate + ADP + H(+). Its pathway is isoprenoid biosynthesis; isopentenyl diphosphate biosynthesis via DXP pathway; isopentenyl diphosphate from 1-deoxy-D-xylulose 5-phosphate: step 3/6. Its function is as follows. Catalyzes the phosphorylation of the position 2 hydroxy group of 4-diphosphocytidyl-2C-methyl-D-erythritol. The protein is 4-diphosphocytidyl-2-C-methyl-D-erythritol kinase of Microcystis aeruginosa (strain NIES-843 / IAM M-2473).